The primary structure comprises 172 residues: Adenine phosphoribosyltransferase (172 aa).

Belongs to the purine/pyrimidine phosphoribosyltransferase family. As to quaternary structure, homodimer.

The protein resides in the cytoplasm. The catalysed reaction is AMP + diphosphate = 5-phospho-alpha-D-ribose 1-diphosphate + adenine. The protein operates within purine metabolism; AMP biosynthesis via salvage pathway; AMP from adenine: step 1/1. Functionally, catalyzes a salvage reaction resulting in the formation of AMP, that is energically less costly than de novo synthesis. This chain is Adenine phosphoribosyltransferase, found in Staphylococcus haemolyticus (strain JCSC1435).